The chain runs to 1322 residues: Serine/threonine-protein phosphatase UIS2 (1322 aa).

The signal sequence occupies residues 1–22 (MNISKFFLIFIPLVLFKYPANN). The tract at residues 1–535 (MNISKFFLIF…NELKSTSNAM (535 aa)) is interaction with phosphorylated eIF2alpha. 2 stretches are compositionally biased toward basic and acidic residues: residues 267–279 (EKSAEKYEDKELN) and 288–326 (NSKKEQTGNDNVSETKMHKEESSDSSNKTDESNVCKSEN). 4 disordered regions span residues 267 to 326 (EKSA…KSEN), 613 to 646 (NTNTDDKNQHNDISTTPINNYTDGNEGNNNSENN), 1066 to 1087 (NETPHNSNEILNTNENESIQPN), and 1170 to 1196 (EVPDESKEDDNTNSQPEDTIDQENKDD). Residues 631-646 (NNYTDGNEGNNNSENN) show a composition bias toward low complexity.

It depends on Mn(2+) as a cofactor.

It catalyses the reaction O-phospho-L-seryl-[protein] + H2O = L-seryl-[protein] + phosphate. Its function is as follows. Protein phosphatase which dephosphorylates 'Ser-59' of translation factor eIF2alpha during the liver stage, thus enabling protein translation. This is Serine/threonine-protein phosphatase UIS2 from Plasmodium berghei (strain Anka).